A 238-amino-acid polypeptide reads, in one-letter code: uncharacterized protein (238 aa).

The Response regulatory domain occupies 3–116 (RVIIVDDEQP…RLAKTLTRLS (114 aa)). Asp-54 carries the 4-aspartylphosphate modification. The 102-residue stretch at 136–237 (IPCSGHNRIF…LKSLKEKLGI (102 aa)) folds into the HTH LytTR-type domain.

This is an uncharacterized protein from Yersinia pestis.